The following is a 231-amino-acid chain: AA9 family lytic polysaccharide monooxygenase F (231 aa).

An N-terminal signal peptide occupies residues 1–17 (MLPSISLLLAAALGTSA). 3 residues coordinate Cu(2+): H18, D50, and H89. D50 serves as a coordination point for O2. Disulfide bonds link C59/C177 and C147/C231. 2 residues coordinate O2: H163 and Q172. Y174 provides a ligand contact to Cu(2+).

This sequence belongs to the polysaccharide monooxygenase AA9 family. It depends on Cu(2+) as a cofactor.

Its subcellular location is the secreted. It catalyses the reaction [(1-&gt;4)-beta-D-glucosyl]n+m + reduced acceptor + O2 = 4-dehydro-beta-D-glucosyl-[(1-&gt;4)-beta-D-glucosyl]n-1 + [(1-&gt;4)-beta-D-glucosyl]m + acceptor + H2O.. Lytic polysaccharide monooxygenase (LPMO) that depolymerizes crystalline and amorphous polysaccharides via the oxidation of scissile alpha- or beta-(1-4)-glycosidic bonds, yielding C1 oxidation products. Catalysis by LPMOs requires the reduction of the active-site copper from Cu(II) to Cu(I) by a reducing agent and H(2)O(2) or O(2) as a cosubstrate. The protein is AA9 family lytic polysaccharide monooxygenase F (gh61-6) of Neurospora crassa (strain ATCC 24698 / 74-OR23-1A / CBS 708.71 / DSM 1257 / FGSC 987).